Reading from the N-terminus, the 282-residue chain is Phosphatidylserine decarboxylase proenzyme (282 aa).

Catalysis depends on charge relay system; for autoendoproteolytic cleavage activity residues aspartate 88, histidine 144, and serine 247. Serine 247 serves as the catalytic Schiff-base intermediate with substrate; via pyruvic acid; for decarboxylase activity. A Pyruvic acid (Ser); by autocatalysis modification is found at serine 247.

It belongs to the phosphatidylserine decarboxylase family. PSD-B subfamily. Prokaryotic type I sub-subfamily. As to quaternary structure, heterodimer of a large membrane-associated beta subunit and a small pyruvoyl-containing alpha subunit. It depends on pyruvate as a cofactor. In terms of processing, is synthesized initially as an inactive proenzyme. Formation of the active enzyme involves a self-maturation process in which the active site pyruvoyl group is generated from an internal serine residue via an autocatalytic post-translational modification. Two non-identical subunits are generated from the proenzyme in this reaction, and the pyruvate is formed at the N-terminus of the alpha chain, which is derived from the carboxyl end of the proenzyme. The autoendoproteolytic cleavage occurs by a canonical serine protease mechanism, in which the side chain hydroxyl group of the serine supplies its oxygen atom to form the C-terminus of the beta chain, while the remainder of the serine residue undergoes an oxidative deamination to produce ammonia and the pyruvoyl prosthetic group on the alpha chain. During this reaction, the Ser that is part of the protease active site of the proenzyme becomes the pyruvoyl prosthetic group, which constitutes an essential element of the active site of the mature decarboxylase.

Its subcellular location is the cell membrane. It carries out the reaction a 1,2-diacyl-sn-glycero-3-phospho-L-serine + H(+) = a 1,2-diacyl-sn-glycero-3-phosphoethanolamine + CO2. The protein operates within phospholipid metabolism; phosphatidylethanolamine biosynthesis; phosphatidylethanolamine from CDP-diacylglycerol: step 2/2. Functionally, catalyzes the formation of phosphatidylethanolamine (PtdEtn) from phosphatidylserine (PtdSer). This Xanthomonas campestris pv. campestris (strain 8004) protein is Phosphatidylserine decarboxylase proenzyme.